Consider the following 111-residue polypeptide: Large ribosomal subunit protein uL22 (111 aa).

It belongs to the universal ribosomal protein uL22 family. As to quaternary structure, part of the 50S ribosomal subunit.

Its function is as follows. This protein binds specifically to 23S rRNA; its binding is stimulated by other ribosomal proteins, e.g. L4, L17, and L20. It is important during the early stages of 50S assembly. It makes multiple contacts with different domains of the 23S rRNA in the assembled 50S subunit and ribosome. Functionally, the globular domain of the protein is located near the polypeptide exit tunnel on the outside of the subunit, while an extended beta-hairpin is found that lines the wall of the exit tunnel in the center of the 70S ribosome. This Thermoanaerobacter pseudethanolicus (strain ATCC 33223 / 39E) (Clostridium thermohydrosulfuricum) protein is Large ribosomal subunit protein uL22.